The primary structure comprises 130 residues: MAENQYYGTGRRKSSAARVFIKPGNGKIVINQRSLEQYFGRETARMVVRQPLELVDMVEKLDLYITVKGGGISGQAGAIRHGITRALMEYDESLRSELRKAGFVTRDARQVERKKVGLRKARRRPQFSKR.

Belongs to the universal ribosomal protein uS9 family.

This is Small ribosomal subunit protein uS9 from Citrobacter koseri (strain ATCC BAA-895 / CDC 4225-83 / SGSC4696).